Reading from the N-terminus, the 272-residue chain is Tryptophan synthase alpha chain (272 aa).

Catalysis depends on proton acceptor residues E53 and D64.

This sequence belongs to the TrpA family. As to quaternary structure, tetramer of two alpha and two beta chains.

It carries out the reaction (1S,2R)-1-C-(indol-3-yl)glycerol 3-phosphate + L-serine = D-glyceraldehyde 3-phosphate + L-tryptophan + H2O. Its pathway is amino-acid biosynthesis; L-tryptophan biosynthesis; L-tryptophan from chorismate: step 5/5. The alpha subunit is responsible for the aldol cleavage of indoleglycerol phosphate to indole and glyceraldehyde 3-phosphate. The sequence is that of Tryptophan synthase alpha chain from Xanthomonas campestris pv. campestris (strain B100).